Here is a 126-residue protein sequence, read N- to C-terminus: Glycine cleavage system H protein (126 aa).

Residues 24-106 (TITVGITDHA…YGEGWFFRMK (83 aa)) form the Lipoyl-binding domain. Lys-65 carries the N6-lipoyllysine modification.

It belongs to the GcvH family. In terms of assembly, the glycine cleavage system is composed of four proteins: P, T, L and H. It depends on (R)-lipoate as a cofactor.

The glycine cleavage system catalyzes the degradation of glycine. The H protein shuttles the methylamine group of glycine from the P protein to the T protein. The chain is Glycine cleavage system H protein from Psychrobacter arcticus (strain DSM 17307 / VKM B-2377 / 273-4).